The sequence spans 179 residues: Adaptation to cold protein A (179 aa).

The tract at residues 133-179 (KATPAPKRSADDDFEDEDSDYADYSDDDDDEGEEEDGYYDHYDDEDR) is disordered. Residues 144–179 (DDFEDEDSDYADYSDDDDDEGEEEDGYYDHYDDEDR) show a composition bias toward acidic residues.

Functionally, part of an operon involved in cold adaptation. The polypeptide is Adaptation to cold protein A (Shewanella oneidensis (strain ATCC 700550 / JCM 31522 / CIP 106686 / LMG 19005 / NCIMB 14063 / MR-1)).